The chain runs to 766 residues: LPS-assembly protein LptD (766 aa).

A signal peptide spans 1-18 (MNIRYLLLLSLMPHLVWA).

Belongs to the LptD family. Component of the lipopolysaccharide transport and assembly complex. Interacts with LptE and LptA.

It localises to the cell outer membrane. Together with LptE, is involved in the assembly of lipopolysaccharide (LPS) at the surface of the outer membrane. In Shewanella denitrificans (strain OS217 / ATCC BAA-1090 / DSM 15013), this protein is LPS-assembly protein LptD.